Here is a 241-residue protein sequence, read N- to C-terminus: Octanoyltransferase (241 aa).

Residues 43 to 228 (AETPDEIWLV…CLTANLDGSP (186 aa)) form the BPL/LPL catalytic domain. Residues 83-90 (RGGQITYH), 159-161 (ALG), and 172-174 (GVS) contribute to the substrate site. Catalysis depends on C190, which acts as the Acyl-thioester intermediate.

Belongs to the LipB family.

The protein resides in the cytoplasm. The catalysed reaction is octanoyl-[ACP] + L-lysyl-[protein] = N(6)-octanoyl-L-lysyl-[protein] + holo-[ACP] + H(+). The protein operates within protein modification; protein lipoylation via endogenous pathway; protein N(6)-(lipoyl)lysine from octanoyl-[acyl-carrier-protein]: step 1/2. Catalyzes the transfer of endogenously produced octanoic acid from octanoyl-acyl-carrier-protein onto the lipoyl domains of lipoate-dependent enzymes. Lipoyl-ACP can also act as a substrate although octanoyl-ACP is likely to be the physiological substrate. This is Octanoyltransferase from Paraburkholderia xenovorans (strain LB400).